A 637-amino-acid chain; its full sequence is 1-deoxy-D-xylulose-5-phosphate synthase (637 aa).

Thiamine diphosphate-binding positions include His71 and 112 to 114 (SHA). Residue Asp144 participates in Mg(2+) binding. Thiamine diphosphate-binding positions include 145–146 (GA), Asn173, Tyr284, and Glu365. Asn173 is a binding site for Mg(2+).

It belongs to the transketolase family. DXPS subfamily. In terms of assembly, homodimer. Mg(2+) serves as cofactor. It depends on thiamine diphosphate as a cofactor.

The catalysed reaction is D-glyceraldehyde 3-phosphate + pyruvate + H(+) = 1-deoxy-D-xylulose 5-phosphate + CO2. Its pathway is metabolic intermediate biosynthesis; 1-deoxy-D-xylulose 5-phosphate biosynthesis; 1-deoxy-D-xylulose 5-phosphate from D-glyceraldehyde 3-phosphate and pyruvate: step 1/1. Functionally, catalyzes the acyloin condensation reaction between C atoms 2 and 3 of pyruvate and glyceraldehyde 3-phosphate to yield 1-deoxy-D-xylulose-5-phosphate (DXP). The polypeptide is 1-deoxy-D-xylulose-5-phosphate synthase (Mycolicibacterium gilvum (strain PYR-GCK) (Mycobacterium gilvum (strain PYR-GCK))).